We begin with the raw amino-acid sequence, 425 residues long: Polyribonucleotide 5'-hydroxyl-kinase Clp1 (425 aa).

ATP is bound by residues glutamate 22, lysine 62, and 124-129 (DVGKST).

The protein belongs to the Clp1 family. Clp1 subfamily. Component of the tRNA splicing endonuclease complex, composed of CLP1, TSEN2, TSEN15, TSEN34 and TSEN54. Component of pre-mRNA cleavage complex II (CF-II). Also associates with numerous components of the pre-mRNA cleavage complex I (CF-I/CFIm), including NUDT21, CPSF2, CPSF3, CPSF6 and CPSF7. Interacts with CSTF2 and SYMPK. The cofactor is Mg(2+). It depends on Mn(2+) as a cofactor. Requires Ni(2+) as cofactor.

The protein localises to the nucleus. The enzyme catalyses a 5'-end dephospho-2'-deoxyribonucleoside-DNA + ATP = a 5'-end 5'-phospho-2'-deoxyribonucleoside-DNA + ADP + H(+). It carries out the reaction a 5'-end dephospho-ribonucleoside-RNA + ATP = a 5'-end 5'-phospho-ribonucleoside-RNA + ADP + H(+). Functionally, polynucleotide kinase that can phosphorylate the 5'-hydroxyl groups of double-stranded RNA (dsRNA), single-stranded RNA (ssRNA), double-stranded DNA (dsDNA) and double-stranded DNA:RNA hybrids. dsRNA is phosphorylated more efficiently than dsDNA, and the RNA component of a DNA:RNA hybrid is phosphorylated more efficiently than the DNA component. Plays a key role in both tRNA splicing and mRNA 3'-end formation. Component of the tRNA splicing endonuclease complex: phosphorylates the 5'-terminus of the tRNA 3'-exon during tRNA splicing; this phosphorylation event is a prerequisite for the subsequent ligation of the two exon halves and the production of a mature tRNA. Its role in tRNA splicing and maturation is required for cerebellar development. Component of the pre-mRNA cleavage complex II (CF-II), which seems to be required for mRNA 3'-end formation. Also phosphorylates the 5'-terminus of exogenously introduced short interfering RNAs (siRNAs), which is a necessary prerequisite for their incorporation into the RNA-induced silencing complex (RISC). However, endogenous siRNAs and microRNAs (miRNAs) that are produced by the cleavage of dsRNA precursors by DICER1 already contain a 5'-phosphate group, so this protein may be dispensible for normal RNA-mediated gene silencing. The sequence is that of Polyribonucleotide 5'-hydroxyl-kinase Clp1 from Homo sapiens (Human).